We begin with the raw amino-acid sequence, 565 residues long: Ubiquitin carboxyl-terminal hydrolase 39 (565 aa).

2 stretches are compositionally biased toward basic and acidic residues: residues 1 to 21 and 28 to 39; these read MSGRSKRESRGSTRGKRESES and VKRERDREREPE. Disordered stretches follow at residues 1 to 61 and 75 to 95; these read MSGR…SARE and EREVDEDSEPEREVRAKNGRV. The residue at position 46 (serine 46) is a Phosphoserine. A Glycyl lysine isopeptide (Lys-Gly) (interchain with G-Cter in SUMO2) cross-link involves residue lysine 51. Serine 82 is modified (phosphoserine). The span at 85-95 shows a compositional bias: basic and acidic residues; it reads EREVRAKNGRV. The segment at 103 to 200 adopts a UBP-type; degenerate zinc-finger fold; it reads RHCPYLDTIN…YVLKPTFTKQ (98 aa). 4 residues coordinate Zn(2+): cysteine 136, cysteine 139, histidine 155, and histidine 161. Residues 225–555 enclose the USP domain; it reads VGLNNIKAND…EAYIQIWKRR (331 aa).

The protein belongs to the peptidase C19 family. In terms of assembly, the U4/U6-U5 tri-snRNP complex is a building block of the precatalytic spliceosome (spliceosome B complex). Component of the U4/U6-U5 tri-snRNP complex composed of the U4, U6 and U5 snRNAs and at least PRPF3, PRPF4, PRPF6, PRPF8, PRPF31, SNRNP200, TXNL4A, SNRNP40, SNRPB, SNRPD1, SNRPD2, SNRPD3, SNRPE, SNRPF, SNRPG, DDX23, CD2BP2, PPIH, SNU13, EFTUD2, SART1 and USP39, plus LSM2, LSM3, LSM4, LSM5, LSM6, LSM7 and LSM8.

The protein resides in the nucleus. The catalysed reaction is Thiol-dependent hydrolysis of ester, thioester, amide, peptide and isopeptide bonds formed by the C-terminal Gly of ubiquitin (a 76-residue protein attached to proteins as an intracellular targeting signal).. Its function is as follows. Deubiquitinating enzyme that plays a role in many cellular processes including cellular antiviral response, epithelial morphogenesis, DNA repair or B-cell development. Plays a role in pre-mRNA splicing as a component of the U4/U6-U5 tri-snRNP, one of the building blocks of the precatalytic spliceosome. Specifically regulates immunoglobulin gene rearrangement in a spliceosome-dependent manner, which involves modulating chromatin interactions at the Igh locus and therefore plays an essential role in B-cell development. Regulates AURKB mRNA levels, and thereby plays a role in cytokinesis and in the spindle checkpoint. Regulates apoptosis and G2/M cell cycle checkpoint in response to DNA damage by deubiquitinating and stabilizing CHK2. Also plays an important role in DNA repair by controlling the recruitment of XRCC4/LIG4 to DNA double-strand breaks for non-homologous end-joining repair. Participates in antiviral activity by affecting the type I IFN signaling by stabilizing STAT1 and decreasing its 'Lys-6'-linked ubiquitination. Contributes to non-canonical Wnt signaling during epidermal differentiation. Acts as a negative regulator NF-kappa-B activation through deubiquitination of 'Lys-48'-linked ubiquitination of NFKBIA. The polypeptide is Ubiquitin carboxyl-terminal hydrolase 39 (Homo sapiens (Human)).